The sequence spans 256 residues: Pimeloyl-[acyl-carrier protein] methyl ester esterase (256 aa).

Residues 15–242 (HLVLLHGWGL…AAHAPFISHP (228 aa)) form the AB hydrolase-1 domain. Residues Trp-22, 82 to 83 (SL), and 143 to 147 (FLALQ) each bind substrate. Ser-82 (nucleophile) is an active-site residue. Residues Asp-207 and His-235 contribute to the active site. Residue His-235 participates in substrate binding.

This sequence belongs to the AB hydrolase superfamily. Carboxylesterase BioH family. In terms of assembly, monomer.

It localises to the cytoplasm. The enzyme catalyses 6-carboxyhexanoyl-[ACP] methyl ester + H2O = 6-carboxyhexanoyl-[ACP] + methanol + H(+). Its pathway is cofactor biosynthesis; biotin biosynthesis. In terms of biological role, the physiological role of BioH is to remove the methyl group introduced by BioC when the pimeloyl moiety is complete. It allows to synthesize pimeloyl-ACP via the fatty acid synthetic pathway through the hydrolysis of the ester bonds of pimeloyl-ACP esters. The chain is Pimeloyl-[acyl-carrier protein] methyl ester esterase from Escherichia coli O139:H28 (strain E24377A / ETEC).